Reading from the N-terminus, the 258-residue chain is Snake venom serine protease KN13 (258 aa).

Positions Met1–Ala18 are cleaved as a signal peptide. Positions Gln19 to Leu24 are excised as a propeptide. The region spanning Val25–Ala249 is the Peptidase S1 domain. 6 disulfides stabilise this stretch: Cys31–Cys163, Cys50–Cys66, Cys98–Cys256, Cys142–Cys210, Cys174–Cys189, and Cys200–Cys225. The active-site Charge relay system is the His65. N-linked (GlcNAc...) asparagine glycosylation is present at Asn103. Asp110 functions as the Charge relay system in the catalytic mechanism. N-linked (GlcNAc...) asparagine glycans are attached at residues Asn121, Asn122, Asn154, and Asn170. The active-site Charge relay system is the Ser204. Asn251 is a glycosylation site (N-linked (GlcNAc...) asparagine).

It belongs to the peptidase S1 family. Snake venom subfamily. In terms of assembly, monomer. As to expression, expressed by the venom gland.

It is found in the secreted. Its function is as follows. Snake venom serine protease that may act in the hemostasis system of the prey. The chain is Snake venom serine protease KN13 from Trimeresurus stejnegeri (Chinese green tree viper).